Consider the following 474-residue polypeptide: tRNA-2-methylthio-N(6)-dimethylallyladenosine synthase (474 aa).

The MTTase N-terminal domain occupies Lys3–Arg120. Cys12, Cys49, Cys83, Cys157, Cys161, and Cys164 together coordinate [4Fe-4S] cluster. One can recognise a Radical SAM core domain in the interval Arg143–Arg375. The TRAM domain maps to Arg378–Arg441.

This sequence belongs to the methylthiotransferase family. MiaB subfamily. In terms of assembly, monomer. It depends on [4Fe-4S] cluster as a cofactor.

The protein localises to the cytoplasm. The enzyme catalyses N(6)-dimethylallyladenosine(37) in tRNA + (sulfur carrier)-SH + AH2 + 2 S-adenosyl-L-methionine = 2-methylsulfanyl-N(6)-dimethylallyladenosine(37) in tRNA + (sulfur carrier)-H + 5'-deoxyadenosine + L-methionine + A + S-adenosyl-L-homocysteine + 2 H(+). Catalyzes the methylthiolation of N6-(dimethylallyl)adenosine (i(6)A), leading to the formation of 2-methylthio-N6-(dimethylallyl)adenosine (ms(2)i(6)A) at position 37 in tRNAs that read codons beginning with uridine. The chain is tRNA-2-methylthio-N(6)-dimethylallyladenosine synthase from Shewanella frigidimarina (strain NCIMB 400).